Here is a 151-residue protein sequence, read N- to C-terminus: Small ribosomal subunit protein uS15 (151 aa).

The tract at residues 1 to 20 is disordered; that stretch reads MARLHSGKRGSSGSTRPLRT.

It belongs to the universal ribosomal protein uS15 family. Part of the 30S ribosomal subunit.

The chain is Small ribosomal subunit protein uS15 from Methanococcus maripaludis (strain DSM 14266 / JCM 13030 / NBRC 101832 / S2 / LL).